The following is a 123-amino-acid chain: Small ribosomal subunit protein uS13 (123 aa).

It belongs to the universal ribosomal protein uS13 family. Part of the 30S ribosomal subunit. Forms a loose heterodimer with protein S19. Forms two bridges to the 50S subunit in the 70S ribosome.

Located at the top of the head of the 30S subunit, it contacts several helices of the 16S rRNA. In the 70S ribosome it contacts the 23S rRNA (bridge B1a) and protein L5 of the 50S subunit (bridge B1b), connecting the 2 subunits; these bridges are implicated in subunit movement. Contacts the tRNAs in the A and P-sites. This is Small ribosomal subunit protein uS13 from Anaplasma marginale (strain St. Maries).